We begin with the raw amino-acid sequence, 269 residues long: Phosphonoacetaldehyde hydrolase (269 aa).

The active-site Nucleophile is the Asp-10. 2 residues coordinate Mg(2+): Asp-10 and Ala-12. The active-site Schiff-base intermediate with substrate is Lys-52. Residue Asp-186 participates in Mg(2+) binding.

The protein belongs to the HAD-like hydrolase superfamily. PhnX family. As to quaternary structure, homodimer. Mg(2+) is required as a cofactor.

It catalyses the reaction phosphonoacetaldehyde + H2O = acetaldehyde + phosphate + H(+). Involved in phosphonate degradation. The chain is Phosphonoacetaldehyde hydrolase from Salmonella paratyphi A (strain ATCC 9150 / SARB42).